Reading from the N-terminus, the 625-residue chain is Protein SUPPRESSOR OF GENE SILENCING 3 (625 aa).

Disordered regions lie at residues 1 to 20 (MSSR…GYRP), 30 to 148 (AGTR…SAQH), and 161 to 195 (VDNA…QKSH). Residues 54-70 (KPGNTSGKTWVSQNSNP) are compositionally biased toward polar residues. The segment covering 80 to 94 (GRGSNVSGRGNNVSG) has biased composition (low complexity). Over residues 161-188 (VDNASEEENDSDALDDSDDDLASDDYDS) the composition is skewed to acidic residues. Coiled coils occupy residues 452–533 (KNKL…QQQE) and 564–615 (IEFQ…EQLM).

Belongs to the SGS3 family. As to quaternary structure, interacts with begomoviruses protein V2. Interacts with SGIP1 in cytoplasmic granules.

It is found in the cytoplasm. Its subcellular location is the perinuclear region. The protein resides in the cytoplasmic granule. Its function is as follows. Required for post-transcriptional gene silencing and natural virus resistance. May bind nucleic acids and is essential for the biogenesis of trans-acting siRNAs but is not required for silencing induced by IR-PTGS. Involved in the juvenile-to-adult transition regulation. In case of begomoviruses infection, it is targeted by the viral protein V2 leading to suppression of post-transcriptional gene silencing. Involved in the mechanisms necessary for quick response to heat and subsequent heritable transgenerational memory of heat acclimation (global warming) such as early flowering and attenuated immunity; this process includes epigenetic regulation as well as post-transcriptional gene silencing (PTGS). In response to heat, HSFA2 is activated and promotes the expression of REF6 which in turn derepresses HSFA2, thus establishing an inheritable feedback loop able to trigger SGIP1 and subsequent SGIP1-mediated SGS3 degradation; this prevents the biosynthesis of trans-acting siRNA (tasiRNA) and leads to the release of HTT5, which drives early flowering but attenuates immunity. In Arabidopsis thaliana (Mouse-ear cress), this protein is Protein SUPPRESSOR OF GENE SILENCING 3.